A 46-amino-acid polypeptide reads, in one-letter code: Large ribosomal subunit protein bL34 (46 aa).

The span at Met1–Ser17 shows a compositional bias: basic residues. The tract at residues Met1 to Pro26 is disordered.

It belongs to the bacterial ribosomal protein bL34 family.

The polypeptide is Large ribosomal subunit protein bL34 (rpmH) (Pseudanabaena sp. (strain PCC 6903)).